We begin with the raw amino-acid sequence, 291 residues long: MKRILLFILTNVAVVAVLGIVASLLGVNRFLTANGLNLSALLGFALIMGFGGAIISLLISKPVAKWSAGVRLINDPQNADEAWIVETVRRLADKAQIGMPEVGIFEGEPNAFATGAFKNSSLVAVSTGLLQGMTKEEIEAVLGHEIAHVANGDMVTMTLIQGVMNTFVVFLSRVIGYAVDSFLRKGDSNSSGPGIGYYVSTIVLDIVLGFAAAIVVAWFSRHREFRADAGAAQLMGRKQPMMNALARLGGMQPGELPKAVEAMGITGSIGKLFATHPPIEERIAALQNAQG.

2 consecutive transmembrane segments (helical) span residues 4–24 (ILLF…VASL) and 39–59 (SALL…SLLI). H144 contacts Zn(2+). E145 is a catalytic residue. H148 is a binding site for Zn(2+). Helical transmembrane passes span 159–179 (LIQG…GYAV) and 199–219 (VSTI…VAWF). E224 is a binding site for Zn(2+).

The protein belongs to the peptidase M48B family. It depends on Zn(2+) as a cofactor.

It is found in the cell inner membrane. The chain is Protease HtpX homolog from Polaromonas naphthalenivorans (strain CJ2).